A 103-amino-acid chain; its full sequence is Pyrimidine/purine nucleoside phosphorylase (103 aa).

Belongs to the nucleoside phosphorylase PpnP family.

The enzyme catalyses a purine D-ribonucleoside + phosphate = a purine nucleobase + alpha-D-ribose 1-phosphate. The catalysed reaction is adenosine + phosphate = alpha-D-ribose 1-phosphate + adenine. It carries out the reaction cytidine + phosphate = cytosine + alpha-D-ribose 1-phosphate. It catalyses the reaction guanosine + phosphate = alpha-D-ribose 1-phosphate + guanine. The enzyme catalyses inosine + phosphate = alpha-D-ribose 1-phosphate + hypoxanthine. The catalysed reaction is thymidine + phosphate = 2-deoxy-alpha-D-ribose 1-phosphate + thymine. It carries out the reaction uridine + phosphate = alpha-D-ribose 1-phosphate + uracil. It catalyses the reaction xanthosine + phosphate = alpha-D-ribose 1-phosphate + xanthine. Functionally, catalyzes the phosphorolysis of diverse nucleosides, yielding D-ribose 1-phosphate and the respective free bases. Can use uridine, adenosine, guanosine, cytidine, thymidine, inosine and xanthosine as substrates. Also catalyzes the reverse reactions. This chain is Pyrimidine/purine nucleoside phosphorylase, found in Chlorobium chlorochromatii (strain CaD3).